Consider the following 236-residue polypeptide: Probable metal transport system ATP-binding protein TC_0697 (236 aa).

Residues 5–236 (LILENVSFRY…FCCNTFGKCS (232 aa)) enclose the ABC transporter domain. ATP is bound at residue 39–46 (GPNGGGKT).

The protein belongs to the ABC transporter superfamily.

It is found in the cell inner membrane. Functionally, part of an ATP-driven transport system TC_0696/TC_0697/TC_0698 for a metal. Probably responsible for energy coupling to the transport system. The chain is Probable metal transport system ATP-binding protein TC_0697 from Chlamydia muridarum (strain MoPn / Nigg).